A 362-amino-acid polypeptide reads, in one-letter code: Aspartate carbamoyltransferase catalytic subunit (362 aa).

A disordered region spans residues 1–22; it reads MPKTAMTDSTSKTSTNTASSDM. Over residues 7-20 the composition is skewed to low complexity; sequence TDSTSKTSTNTASS. Residues Arg100 and Thr101 each coordinate carbamoyl phosphate. Residue Lys128 coordinates L-aspartate. Arg150, His180, and Gln183 together coordinate carbamoyl phosphate. 2 residues coordinate L-aspartate: Arg214 and Arg269. The carbamoyl phosphate site is built by Gly310 and Pro311.

It belongs to the aspartate/ornithine carbamoyltransferase superfamily. ATCase family. As to quaternary structure, heterododecamer (2C3:3R2) of six catalytic PyrB chains organized as two trimers (C3), and six regulatory PyrI chains organized as three dimers (R2).

The enzyme catalyses carbamoyl phosphate + L-aspartate = N-carbamoyl-L-aspartate + phosphate + H(+). It functions in the pathway pyrimidine metabolism; UMP biosynthesis via de novo pathway; (S)-dihydroorotate from bicarbonate: step 2/3. Catalyzes the condensation of carbamoyl phosphate and aspartate to form carbamoyl aspartate and inorganic phosphate, the committed step in the de novo pyrimidine nucleotide biosynthesis pathway. This Psychrobacter sp. (strain PRwf-1) protein is Aspartate carbamoyltransferase catalytic subunit.